Here is a 1210-residue protein sequence, read N- to C-terminus: MAAAAGAAAAAAAEGEAPAEMGALLLEKETRGATERVHGSLGDTPRSEETLPKATPDSLEPAGPSSPASVTVTVGDEGADTPVGATPLIGDESENLEGDGDLRGGRILLGHATKSFPSSPSKGGSCPSRAKMSMTGAGKSPPSVQSLAMRLLSMPGAQGAAAAGSEPPPATTSPEGQPKVHRARKTMSKPGNGQPPVPEKRPPEIQHFRMSDDVHSLGKVTSDLAKRRKLNSGGGLSEELGSARRSGEVTLTKGDPGSLEEWETVVGDDFSLYYDSYSVDERVDSDSKSEVEALTEQLSEEEEEEEEEEEEEEEEEEEEEEEEDEESGNQSDRSGSSGRRKAKKKWRKDSPWVKPSRKRRKREPPRAKEPRGVNGVGSSGPSEYMEVPLGSLELPSEGTLSPNHAGVSNDTSSLETERGFEELPLCSCRMEAPKIDRISERAGHKCMATESVDGELSGCNAAILKRETMRPSSRVALMVLCETHRARMVKHHCCPGCGYFCTAGTFLECHPDFRVAHRFHKACVSQLNGMVFCPHCGEDASEAQEVTIPRGDGVTPPAGTAAPAPPPLSQDVPGRADTSQPSARMRGHGEPRRPPCDPLADTIDSSGPSLTLPNGGCLSAVGLPLGPGREALEKALVIQESERRKKLRFHPRQLYLSVKQGELQKVILMLLDNLDPNFQSDQQSKRTPLHAAAQKGSVEICHVLLQAGANINAVDKQQRTPLMEAVVNNHLEVARYMVQRGGCVYSKEEDGSTCLHHAAKIGNLEMVSLLLSTGQVDVNAQDSGGWTPIIWAAEHKHIEVIRMLLTRGADVTLTDNEENICLHWASFTGSAAIAEVLLNARCDLHAVNYHGDTPLHIAARESYHDCVLLFLSRGANPELRNKEGDTAWDLTPERSDVWFALQLNRKLRLGVGNRAIRTEKIICRDVARGYENVPIPCVNGVDGEPCPEDYKYISENCETSTMNIDRNITHLQHCTCVDDCSSSNCLCGQLSIRCWYDKDGRLLQEFNKIEPPLIFECNQACSCWRNCKNRVVQSGIKVRLQLYRTAKMGWGVRALQTIPQGTFICEYVGELISDAEADVREDDSYLFDLDNKDGEVYCIDARYYGNISRFINHLCDPNIIPVRVFMLHQDLRFPRIAFFSSRDIRTGEELGFDYGDRFWDIKSKYFTCQCGSEKCKHSAEAIALEQSRLARLDPHPELLPELGSLPPVNT.

Positions 1–23 are enriched in low complexity; the sequence is MAAAAGAAAAAAAEGEAPAEMGA. 2 disordered regions span residues 1 to 262 and 280 to 386; these read MAAA…LEEW and DERV…EYME. An N-acetylalanine modification is found at alanine 2. A compositionally biased stretch (basic and acidic residues) spans 26-38; sequence LEKETRGATERVH. The residue at position 40 (serine 40) is a Phosphoserine. Threonine 44 is modified (phosphothreonine). Serine 47 carries the post-translational modification Phosphoserine. Residues 105 to 128 show a composition bias toward low complexity; the sequence is GRILLGHATKSFPSSPSKGGSCPS. Residue serine 140 is modified to Phosphoserine. A compositionally biased stretch (low complexity) spans 155 to 165; it reads PGAQGAAAAGS. Residue serine 173 is modified to Phosphoserine. Lysine 185 bears the N6,N6,N6-trimethyllysine; by EHMT2; alternate mark. Lysine 185 carries the post-translational modification N6,N6-dimethyllysine; by EHMT2; alternate. Residues 198–216 are compositionally biased toward basic and acidic residues; it reads PEKRPPEIQHFRMSDDVHS. Residues lysine 219 and lysine 229 each participate in a glycyl lysine isopeptide (Lys-Gly) (interchain with G-Cter in SUMO2) cross-link. Phosphoserine is present on residues serine 232, serine 242, and serine 246. The segment covering 280–291 has biased composition (basic and acidic residues); that stretch reads DERVDSDSKSEV. Over residues 298–327 the composition is skewed to acidic residues; that stretch reads LSEEEEEEEEEEEEEEEEEEEEEEEEDEES. The segment covering 338–347 has biased composition (basic residues); sequence GRRKAKKKWR. Residues serine 350, serine 412, and serine 413 each carry the phosphoserine modification. The segment at 548 to 608 is disordered; the sequence is IPRGDGVTPP…LADTIDSSGP (61 aa). Threonine 555 is subject to Phosphothreonine. The residue at position 569 (serine 569) is a Phosphoserine. Residue lysine 634 forms a Glycyl lysine isopeptide (Lys-Gly) (interchain with G-Cter in SUMO2) linkage. 7 ANK repeats span residues 649-678, 684-713, 717-746, 750-780, 784-813, 817-846, and 850-879; these read FHPR…DPNF, SKRT…NINA, QQRT…CVYS, DGST…DVNA, GGWT…DVTL, EENI…DLHA, and HGDT…NPEL. The tract at residues 817–819 is histone H3K9me binding; the sequence is EEN. One can recognise a Pre-SET domain in the interval 972–1035; that stretch reads QHCTCVDDCS…NCKNRVVQSG (64 aa). Cysteine 974, cysteine 976, cysteine 980, cysteine 985, cysteine 987, cysteine 1017, cysteine 1021, cysteine 1023, and cysteine 1027 together coordinate Zn(2+). The SET domain occupies 1038–1155; it reads VRLQLYRTAK…TGEELGFDYG (118 aa). S-adenosyl-L-methionine-binding positions include 1048–1050, tyrosine 1085, and 1112–1113; these read MGW and NH. Positions 1074–1093 are interaction with histone H3; the sequence is DAEADVREDDSYLFDLDNKD. Cysteine 1115 provides a ligand contact to Zn(2+). The segment at 1154-1157 is interaction with histone H3; that stretch reads YGDR. The Post-SET domain maps to 1164 to 1180; that stretch reads KYFTCQCGSEKCKHSAE. Cysteine 1168 lines the Zn(2+) pocket. S-adenosyl-L-methionine is bound at residue glutamine 1169. Zn(2+) is bound by residues cysteine 1170 and cysteine 1175. Serine 1204 carries the phosphoserine modification. A Phosphothreonine modification is found at threonine 1210.

The protein belongs to the class V-like SAM-binding methyltransferase superfamily. Histone-lysine methyltransferase family. Suvar3-9 subfamily. In terms of assembly, heterodimer; heterodimerizes with EHMT1/GLP. Interacts with GFI1B and WIZ. Part of the E2F6.com-1 complex in G0 phase composed of E2F6, MGA, MAX, TFDP1, CBX3, BAT8, EHMT1, RING1, RNF2, MBLR, L3MBTL2 and YAF2. Part of a complex composed of TRIM28, HDAC1, HDAC2 and EHMT2. Interacts with UHRF1. Interacts with CDYL. Interacts with REST only in the presence of CDYL. Part of a complex containing at least CDYL, REST, WIZ, SETB1, EHMT1 and EHMT2. Interacts with PRDM9 and CDYL; interaction only takes place when PRDM9 is bound to hotspot DNA. Interacts with SMYD5. In terms of processing, methylated at Lys-185; automethylated. Expressed in all tissues examined, with high levels in fetal liver, thymus, lymph node, spleen and peripheral blood leukocytes and lower level in bone marrow.

It localises to the nucleus. It is found in the chromosome. The catalysed reaction is N(6)-methyl-L-lysyl(9)-[histone H3] + S-adenosyl-L-methionine = N(6),N(6)-dimethyl-L-lysyl(9)-[histone H3] + S-adenosyl-L-homocysteine + H(+). It carries out the reaction L-lysyl(9)-[histone H3] + S-adenosyl-L-methionine = N(6)-methyl-L-lysyl(9)-[histone H3] + S-adenosyl-L-homocysteine + H(+). Functionally, histone methyltransferase that specifically mono- and dimethylates 'Lys-9' of histone H3 (H3K9me1 and H3K9me2, respectively) in euchromatin. H3K9me represents a specific tag for epigenetic transcriptional repression by recruiting HP1 proteins to methylated histones. Also mediates monomethylation of 'Lys-56' of histone H3 (H3K56me1) in G1 phase, leading to promote interaction between histone H3 and PCNA and regulating DNA replication. Also weakly methylates 'Lys-27' of histone H3 (H3K27me). Also required for DNA methylation, the histone methyltransferase activity is not required for DNA methylation, suggesting that these 2 activities function independently. Probably targeted to histone H3 by different DNA-binding proteins like E2F6, MGA, MAX and/or DP1. May also methylate histone H1. In addition to the histone methyltransferase activity, also methylates non-histone proteins: mediates dimethylation of 'Lys-373' of p53/TP53. Also methylates CDYL, WIZ, ACIN1, DNMT1, HDAC1, ERCC6, KLF12 and itself. This Homo sapiens (Human) protein is Histone-lysine N-methyltransferase EHMT2 (EHMT2).